The chain runs to 211 residues: MTTLTRQDLNFGQVVADILCEFLEVAVHLILYVREVYPTGIFQKRKKYNVPVQMSCHPELNRYIQDTLHCVKPLIEKNDVEKVVVVILDKEHHPVERFVFEIAQPPLLSISSDSLLSHVEQLLRAFILKISVCDAVLDNNPPGCTFTLLVHTREAATRNMEKIQVIKDFPWILADEQDVHMQEPRLIPLKTMTSDILKMQLYVEERAQKST.

In terms of domain architecture, HORMA spans 13-203 (QVVADILCEF…SDILKMQLYV (191 aa)).

Homooligomer. Interacts with rev1. Interacts with rev3l. Interacts with fzr1 (in complex with the anaphase promoting complex APC). May interact with cdc20.

The protein localises to the nucleus. It localises to the cytoplasm. The protein resides in the cytoskeleton. It is found in the spindle. Functionally, adapter protein able to interact with different proteins and involved in different biological processes. Mediates the interaction between the error-prone DNA polymerase zeta catalytic subunit rev3l and the inserter polymerase rev1, thereby mediating the second polymerase switching in translesion DNA synthesis. Translesion DNA synthesis releases the replication blockade of replicative polymerases, stalled in presence of DNA lesions. May also play a role in signal transduction in response to DNA damage. May regulate the activation of the anaphase promoting complex APC thereby regulating progression through the cell cycle. Through transcriptional regulation may play a role in epithelial-mesenchymal transdifferentiation. Its function is as follows. Inhibits the fzr1-APC complex activity during mitosis. Plays a role in progression of mitosis. This Xenopus laevis (African clawed frog) protein is Mitotic spindle assembly checkpoint protein MAD2B (mad2l2).